Here is a 97-residue protein sequence, read N- to C-terminus: Aspartyl/glutamyl-tRNA(Asn/Gln) amidotransferase subunit C (97 aa).

Belongs to the GatC family. As to quaternary structure, heterotrimer of A, B and C subunits.

The catalysed reaction is L-glutamyl-tRNA(Gln) + L-glutamine + ATP + H2O = L-glutaminyl-tRNA(Gln) + L-glutamate + ADP + phosphate + H(+). It catalyses the reaction L-aspartyl-tRNA(Asn) + L-glutamine + ATP + H2O = L-asparaginyl-tRNA(Asn) + L-glutamate + ADP + phosphate + 2 H(+). Allows the formation of correctly charged Asn-tRNA(Asn) or Gln-tRNA(Gln) through the transamidation of misacylated Asp-tRNA(Asn) or Glu-tRNA(Gln) in organisms which lack either or both of asparaginyl-tRNA or glutaminyl-tRNA synthetases. The reaction takes place in the presence of glutamine and ATP through an activated phospho-Asp-tRNA(Asn) or phospho-Glu-tRNA(Gln). The protein is Aspartyl/glutamyl-tRNA(Asn/Gln) amidotransferase subunit C of Nostoc punctiforme (strain ATCC 29133 / PCC 73102).